A 659-amino-acid chain; its full sequence is Ion-translocating oxidoreductase complex subunit C (659 aa).

2 4Fe-4S ferredoxin-type domains span residues 366-397 (TEMG…QQLY) and 407-436 (KARN…VQYY). The [4Fe-4S] cluster site is built by cysteine 377, cysteine 380, cysteine 383, cysteine 387, cysteine 416, cysteine 419, cysteine 422, and cysteine 426.

It belongs to the 4Fe4S bacterial-type ferredoxin family. RnfC subfamily. In terms of assembly, the complex is composed of six subunits: RnfA, RnfB, RnfC, RnfD, RnfE and RnfG. [4Fe-4S] cluster serves as cofactor.

The protein resides in the cell inner membrane. Part of a membrane-bound complex that couples electron transfer with translocation of ions across the membrane. This is Ion-translocating oxidoreductase complex subunit C from Yersinia pestis bv. Antiqua (strain Nepal516).